The following is a 208-amino-acid chain: Ras-related protein Rab-6A (208 aa).

Ser-2 is subject to N-acetylserine. Positions 23, 24, 25, 26, 27, 28, 39, 40, 42, and 45 each coordinate GTP. Residue Thr-27 coordinates Mg(2+). The Switch 1 motif lies at 32 to 50 (RFMYDSFDNTYQATIGIDF). 2 residues coordinate Mg(2+): Thr-45 and Asp-68. The Switch 2 motif lies at 69 to 88 (TAGQERFRSLIPSYIRDSTV). Gly-71 is a GTP binding site. Position 82 is an O-AMP-tyrosine; by Legionella DrrA (Tyr-82). GTP contacts are provided by Asn-126, Lys-127, Asp-129, Ser-156, Ala-157, and Lys-158. Phosphoserine is present on Ser-184. Residues Cys-206 and Cys-208 are each lipidated (S-geranylgeranyl cysteine). The residue at position 208 (Cys-208) is a Cysteine methyl ester.

The protein belongs to the small GTPase superfamily. Rab family. As to quaternary structure, interacts (GTP-bound) with DYNLRB1; the interaction is direct. Interacts with BICD1. Interacts with BICD2; the interaction is direct. Interacts (GTP-bound) with VPS13B. In terms of assembly, interacts with BICD1. Interacts (GDP-bound) with DYNLRB1; the interaction is direct. Interacts (GTP-bound) with VPS13B. Interacts with BICDL1; leads to its accumulation in the pericentrosomal region. Interacts with SCYL1BP1. Interacts with VSP52. Interacts with RABGAP1. Interacts with GCC2 (via its GRIP domain). Interacts with RAB6IP1 (via its RUN 1 domain). Interacts with TMF1. Interacts with CIMAP3. Interacts (GTP-bound) with APBA1/MINT1 isoform 2, also called Mint1_826, but not with isoform 1. Interacts with RIC1; the interaction is direct with a preference for RAB6A-GDP. Interacts with RGP1; the interaction is direct with a preference for RAB6A-GDP. As to quaternary structure, (Microbial infection) Interacts with human cytomegalovirus protein UL32. Mg(2+) is required as a cofactor. Post-translationally, prenylated. In terms of tissue distribution, ubiquitous.

The protein localises to the golgi apparatus membrane. Its subcellular location is the cytoplasmic vesicle. It is found in the secretory vesicle. The protein resides in the acrosome membrane. The catalysed reaction is GTP + H2O = GDP + phosphate + H(+). Regulated by guanine nucleotide exchange factors (GEFs) which promote the exchange of bound GDP for free GTP. Regulated by GTPase activating proteins (GAPs) which increase the GTP hydrolysis activity. Inhibited by GDP dissociation inhibitors (GDIs). Functionally, the small GTPases Rab are key regulators of intracellular membrane trafficking, from the formation of transport vesicles to their fusion with membranes. Rabs cycle between an inactive GDP-bound form and an active GTP-bound form that is able to recruit to membranes different sets of downstream effectors directly responsible for vesicle formation, movement, tethering and fusion. RAB6A acts as a regulator of COPI-independent retrograde transport from the Golgi apparatus towards the endoplasmic reticulum (ER). Has a low GTPase activity. Recruits VPS13B to the Golgi membrane. Plays a role in neuron projection development. The sequence is that of Ras-related protein Rab-6A from Homo sapiens (Human).